We begin with the raw amino-acid sequence, 401 residues long: Nicotinate phosphoribosyltransferase (401 aa).

Position 221 is a phosphohistidine; by autocatalysis (H221).

The protein belongs to the NAPRTase family. Transiently phosphorylated on a His residue during the reaction cycle. Phosphorylation strongly increases the affinity for substrates and increases the rate of nicotinate D-ribonucleotide production. Dephosphorylation regenerates the low-affinity form of the enzyme, leading to product release.

The catalysed reaction is nicotinate + 5-phospho-alpha-D-ribose 1-diphosphate + ATP + H2O = nicotinate beta-D-ribonucleotide + ADP + phosphate + diphosphate. The protein operates within cofactor biosynthesis; NAD(+) biosynthesis; nicotinate D-ribonucleotide from nicotinate: step 1/1. Catalyzes the synthesis of beta-nicotinate D-ribonucleotide from nicotinate and 5-phospho-D-ribose 1-phosphate at the expense of ATP. The protein is Nicotinate phosphoribosyltransferase of Edwardsiella ictaluri (strain 93-146).